The following is a 358-amino-acid chain: Peptide chain release factor 1 (358 aa).

N5-methylglutamine is present on Gln-233.

This sequence belongs to the prokaryotic/mitochondrial release factor family. Post-translationally, methylated by PrmC. Methylation increases the termination efficiency of RF1.

It localises to the cytoplasm. Its function is as follows. Peptide chain release factor 1 directs the termination of translation in response to the peptide chain termination codons UAG and UAA. This is Peptide chain release factor 1 from Blochmanniella floridana.